Consider the following 201-residue polypeptide: Holliday junction branch migration complex subunit RuvA (201 aa).

Residues 1–65 (MIAYIEGRVA…EDALELYGFS (65 aa)) are domain I. A domain II region spans residues 66–143 (GWDERQTFLV…KVESLPASAG (78 aa)). Residues 143–147 (GLAAG) form a flexible linker region. Residues 148–201 (VPGSVLRDAVQALGNLGYAEEEAAPVLKNILKQDPDLDVSEALRAALKALAKAR) are domain III.

The protein belongs to the RuvA family. Homotetramer. Forms an RuvA(8)-RuvB(12)-Holliday junction (HJ) complex. HJ DNA is sandwiched between 2 RuvA tetramers; dsDNA enters through RuvA and exits via RuvB. An RuvB hexamer assembles on each DNA strand where it exits the tetramer. Each RuvB hexamer is contacted by two RuvA subunits (via domain III) on 2 adjacent RuvB subunits; this complex drives branch migration. In the full resolvosome a probable DNA-RuvA(4)-RuvB(12)-RuvC(2) complex forms which resolves the HJ.

It is found in the cytoplasm. The RuvA-RuvB-RuvC complex processes Holliday junction (HJ) DNA during genetic recombination and DNA repair, while the RuvA-RuvB complex plays an important role in the rescue of blocked DNA replication forks via replication fork reversal (RFR). RuvA specifically binds to HJ cruciform DNA, conferring on it an open structure. The RuvB hexamer acts as an ATP-dependent pump, pulling dsDNA into and through the RuvAB complex. HJ branch migration allows RuvC to scan DNA until it finds its consensus sequence, where it cleaves and resolves the cruciform DNA. This is Holliday junction branch migration complex subunit RuvA from Oleidesulfovibrio alaskensis (strain ATCC BAA-1058 / DSM 17464 / G20) (Desulfovibrio alaskensis).